A 198-amino-acid polypeptide reads, in one-letter code: Segregation and condensation protein B (198 aa).

The disordered stretch occupies residues 168-198 (KLADPATDEPDQNEMDLFFDRFNQSKEQEEE).

This sequence belongs to the ScpB family. As to quaternary structure, homodimer. Homodimerization may be required to stabilize the binding of ScpA to the Smc head domains. Component of a cohesin-like complex composed of ScpA, ScpB and the Smc homodimer, in which ScpA and ScpB bind to the head domain of Smc. The presence of the three proteins is required for the association of the complex with DNA.

It localises to the cytoplasm. Its function is as follows. Participates in chromosomal partition during cell division. May act via the formation of a condensin-like complex containing Smc and ScpA that pull DNA away from mid-cell into both cell halves. The protein is Segregation and condensation protein B of Listeria monocytogenes serovar 1/2a (strain ATCC BAA-679 / EGD-e).